A 283-amino-acid chain; its full sequence is Pantothenate synthetase (283 aa).

Residue 30–37 coordinates ATP; the sequence is MGNLHDGH. The active-site Proton donor is the His37. Gln61 contributes to the (R)-pantoate binding site. Gln61 serves as a coordination point for beta-alanine. 149–152 is a binding site for ATP; that stretch reads GEKD. Gln155 contacts (R)-pantoate. Position 186–189 (186–189) interacts with ATP; the sequence is LSSR.

It belongs to the pantothenate synthetase family. As to quaternary structure, homodimer.

The protein resides in the cytoplasm. It catalyses the reaction (R)-pantoate + beta-alanine + ATP = (R)-pantothenate + AMP + diphosphate + H(+). It functions in the pathway cofactor biosynthesis; (R)-pantothenate biosynthesis; (R)-pantothenate from (R)-pantoate and beta-alanine: step 1/1. Its function is as follows. Catalyzes the condensation of pantoate with beta-alanine in an ATP-dependent reaction via a pantoyl-adenylate intermediate. This Escherichia coli O157:H7 protein is Pantothenate synthetase.